The following is a 111-amino-acid chain: uncharacterized protein (111 aa).

Residues 27 to 47 (HLFHFPSISFFFFFFFFFFSF) form a helical membrane-spanning segment.

The protein localises to the membrane. This is an uncharacterized protein from Saccharomyces cerevisiae (strain ATCC 204508 / S288c) (Baker's yeast).